A 140-amino-acid chain; its full sequence is Nucleoside diphosphate kinase (140 aa).

The ATP site is built by lysine 11, phenylalanine 59, arginine 87, threonine 93, arginine 104, and asparagine 114. The active-site Pros-phosphohistidine intermediate is histidine 117.

It belongs to the NDK family. Mg(2+) serves as cofactor.

It is found in the cytoplasm. It carries out the reaction a 2'-deoxyribonucleoside 5'-diphosphate + ATP = a 2'-deoxyribonucleoside 5'-triphosphate + ADP. The catalysed reaction is a ribonucleoside 5'-diphosphate + ATP = a ribonucleoside 5'-triphosphate + ADP. Major role in the synthesis of nucleoside triphosphates other than ATP. The ATP gamma phosphate is transferred to the NDP beta phosphate via a ping-pong mechanism, using a phosphorylated active-site intermediate. This chain is Nucleoside diphosphate kinase, found in Metallosphaera sedula (strain ATCC 51363 / DSM 5348 / JCM 9185 / NBRC 15509 / TH2).